The following is a 31-amino-acid chain: Cytochrome b6-f complex subunit 6 (31 aa).

The chain crosses the membrane as a helical span at residues 4–26 (ITSYFGFLLAALTITPALLISLN).

It belongs to the PetL family. The 4 large subunits of the cytochrome b6-f complex are cytochrome b6, subunit IV (17 kDa polypeptide, PetD), cytochrome f and the Rieske protein, while the 4 small subunits are PetG, PetL, PetM and PetN. The complex functions as a dimer.

Its subcellular location is the plastid. The protein localises to the chloroplast thylakoid membrane. Component of the cytochrome b6-f complex, which mediates electron transfer between photosystem II (PSII) and photosystem I (PSI), cyclic electron flow around PSI, and state transitions. PetL is important for photoautotrophic growth as well as for electron transfer efficiency and stability of the cytochrome b6-f complex. In Dioscorea elephantipes (Elephant's foot yam), this protein is Cytochrome b6-f complex subunit 6.